A 160-amino-acid polypeptide reads, in one-letter code: Putative UPF0479 protein YNL339W-B (160 aa).

2 helical membrane-spanning segments follow: residues 39–59 and 136–156; these read IVFCLPFFPALFFVPVQKVLQ and VPMIWLDVFQVFFVFLVISQH.

It belongs to the UPF0479 family.

Its subcellular location is the membrane. The protein is Putative UPF0479 protein YNL339W-B of Saccharomyces cerevisiae (strain ATCC 204508 / S288c) (Baker's yeast).